The chain runs to 940 residues: Phosphoenolpyruvate carboxylase (940 aa).

Active-site residues include His138 and Lys603.

This sequence belongs to the PEPCase type 1 family. Mg(2+) is required as a cofactor.

It catalyses the reaction oxaloacetate + phosphate = phosphoenolpyruvate + hydrogencarbonate. Its function is as follows. Forms oxaloacetate, a four-carbon dicarboxylic acid source for the tricarboxylic acid cycle. The protein is Phosphoenolpyruvate carboxylase of Streptococcus thermophilus (strain ATCC BAA-491 / LMD-9).